The following is an 86-amino-acid chain: Large ribosomal subunit protein bL31B (86 aa).

This sequence belongs to the bacterial ribosomal protein bL31 family. Type B subfamily. In terms of assembly, part of the 50S ribosomal subunit.

The protein is Large ribosomal subunit protein bL31B of Streptococcus equi subsp. equi (strain 4047).